The primary structure comprises 356 residues: Histidinol-phosphate aminotransferase (356 aa).

At Lys-214 the chain carries N6-(pyridoxal phosphate)lysine.

It belongs to the class-II pyridoxal-phosphate-dependent aminotransferase family. Histidinol-phosphate aminotransferase subfamily. In terms of assembly, homodimer. The cofactor is pyridoxal 5'-phosphate.

The enzyme catalyses L-histidinol phosphate + 2-oxoglutarate = 3-(imidazol-4-yl)-2-oxopropyl phosphate + L-glutamate. It functions in the pathway amino-acid biosynthesis; L-histidine biosynthesis; L-histidine from 5-phospho-alpha-D-ribose 1-diphosphate: step 7/9. The polypeptide is Histidinol-phosphate aminotransferase (Escherichia coli O8 (strain IAI1)).